The following is an 896-amino-acid chain: Isoleucine--tRNA ligase (896 aa).

Residues 57–67 (PYANNNIHIGH) carry the 'HIGH' region motif. Glutamate 543 provides a ligand contact to L-isoleucyl-5'-AMP. The 'KMSKS' region signature appears at 584 to 588 (KMSKS). Residue lysine 587 participates in ATP binding. Positions 869, 872, 885, and 888 each coordinate Zn(2+).

It belongs to the class-I aminoacyl-tRNA synthetase family. IleS type 1 subfamily. As to quaternary structure, monomer. It depends on Zn(2+) as a cofactor.

It is found in the cytoplasm. The catalysed reaction is tRNA(Ile) + L-isoleucine + ATP = L-isoleucyl-tRNA(Ile) + AMP + diphosphate. Functionally, catalyzes the attachment of isoleucine to tRNA(Ile). As IleRS can inadvertently accommodate and process structurally similar amino acids such as valine, to avoid such errors it has two additional distinct tRNA(Ile)-dependent editing activities. One activity is designated as 'pretransfer' editing and involves the hydrolysis of activated Val-AMP. The other activity is designated 'posttransfer' editing and involves deacylation of mischarged Val-tRNA(Ile). The polypeptide is Isoleucine--tRNA ligase (Acholeplasma laidlawii (strain PG-8A)).